The primary structure comprises 303 residues: Phospholipase A1 2 (303 aa).

Residues C6 and C90 are joined by a disulfide bond. Catalysis depends on S140, which acts as the Nucleophile. D168 acts as the Charge relay system in catalysis. Residues C179 and C184 are joined by a disulfide bond. H232 acts as the Charge relay system in catalysis. 3 disulfides stabilise this stretch: C247/C271, C248/C296, and C264/C269.

The protein belongs to the AB hydrolase superfamily. Lipase family. Expressed by the venom gland.

The protein localises to the secreted. It carries out the reaction a 1,2-diacyl-sn-glycero-3-phosphocholine + H2O = a 2-acyl-sn-glycero-3-phosphocholine + a fatty acid + H(+). Functionally, catalyzes the hydrolysis of phosphatidylcholine with phospholipase A1 activity. May act as an allergen and induce hemolytic activity. This Dolichovespula maculata (Bald-faced hornet) protein is Phospholipase A1 2.